A 90-amino-acid polypeptide reads, in one-letter code: Barrier-to-autointegration factor A (90 aa).

This sequence belongs to the BAF family. In terms of assembly, homodimer. Interacts with nemp1a and nemp1b. Post-translationally, phosphorylated during S and M phases.

It localises to the nucleus. Its subcellular location is the chromosome. It is found in the nucleus envelope. The protein resides in the cytoplasm. In terms of biological role, non-specific DNA-binding protein that plays key roles in mitotic nuclear reassembly, chromatin organization, DNA damage response, gene expression and intrinsic immunity against foreign DNA. Contains two non-specific double-stranded DNA (dsDNA)-binding sites which promote DNA cross-bridging. Plays a key role in nuclear membrane reformation at the end of mitosis by driving formation of a single nucleus in a spindle-independent manner. Transiently cross-bridges anaphase chromosomes via its ability to bridge distant DNA sites, leading to the formation of a dense chromatin network at the chromosome ensemble surface that limits membranes to the surface. Also acts as a negative regulator of innate immune activation by restricting CGAS activity toward self-DNA upon acute loss of nuclear membrane integrity. Outcompetes CGAS for DNA-binding, thereby preventing CGAS activation and subsequent damaging autoinflammatory responses. Also involved in DNA damage response; acts by inhibiting the ADP-ribosyltransferase activity of PARP1. Involved in the recognition of exogenous dsDNA in the cytosol: associates with exogenous dsDNA immediately after its appearance in the cytosol at endosome breakdown and is required to avoid autophagy. The protein is Barrier-to-autointegration factor A (banf1-a) of Xenopus laevis (African clawed frog).